The primary structure comprises 363 residues: Probable transglycosylase BTH_I0986 (363 aa).

The protein belongs to the glycosyltransferase group 1 family. Glycosyltransferase 4 subfamily.

Probably a transglycosylase. Probably involved in synthesis of the outer membrane receptor for a cellular contact-dependent growth inhibition (CDI) system. The protein is Probable transglycosylase BTH_I0986 of Burkholderia thailandensis (strain ATCC 700388 / DSM 13276 / CCUG 48851 / CIP 106301 / E264).